The following is a 474-amino-acid chain: Aspartyl/glutamyl-tRNA(Asn/Gln) amidotransferase subunit B (474 aa).

Belongs to the GatB/GatE family. GatB subfamily. In terms of assembly, heterotrimer of A, B and C subunits.

The catalysed reaction is L-glutamyl-tRNA(Gln) + L-glutamine + ATP + H2O = L-glutaminyl-tRNA(Gln) + L-glutamate + ADP + phosphate + H(+). The enzyme catalyses L-aspartyl-tRNA(Asn) + L-glutamine + ATP + H2O = L-asparaginyl-tRNA(Asn) + L-glutamate + ADP + phosphate + 2 H(+). Functionally, allows the formation of correctly charged Asn-tRNA(Asn) or Gln-tRNA(Gln) through the transamidation of misacylated Asp-tRNA(Asn) or Glu-tRNA(Gln) in organisms which lack either or both of asparaginyl-tRNA or glutaminyl-tRNA synthetases. The reaction takes place in the presence of glutamine and ATP through an activated phospho-Asp-tRNA(Asn) or phospho-Glu-tRNA(Gln). The chain is Aspartyl/glutamyl-tRNA(Asn/Gln) amidotransferase subunit B from Limosilactobacillus fermentum (strain NBRC 3956 / LMG 18251) (Lactobacillus fermentum).